We begin with the raw amino-acid sequence, 1331 residues long: Mitogen-activated protein kinase kinase kinase 15 (1331 aa).

The segment covering 1 to 13 (MEGGGGSGGGGGP) has biased composition (gly residues). The tract at residues 1-61 (MEGGGGSGGG…GEAEGGRGPR (61 aa)) is disordered. Residues 656 to 912 (NGERVVLGKG…AADLLQEGFL (257 aa)) enclose the Protein kinase domain. ATP contacts are provided by residues 662–670 (LGKGSYGIV) and Lys685. The Proton acceptor role is filled by Asp777. Disordered stretches follow at residues 934–964 (GTGT…SDAQ) and 983–1005 (LSVP…EERD). Positions 940–962 (LPSSGELVGSSSSEHGSISPDSD) are enriched in low complexity. Residues 992–1005 (LDDRSTALPPEERD) are compositionally biased toward basic and acidic residues. Residues 1216 to 1236 (LVQKEREYQNLLRLILDQKTQ) are a coiled coil.

It belongs to the protein kinase superfamily. STE Ser/Thr protein kinase family. MAP kinase kinase kinase subfamily. Mg(2+) is required as a cofactor.

It catalyses the reaction L-seryl-[protein] + ATP = O-phospho-L-seryl-[protein] + ADP + H(+). The enzyme catalyses L-threonyl-[protein] + ATP = O-phospho-L-threonyl-[protein] + ADP + H(+). Contains an N-terminal autoinhibitory domain. Activated by phosphorylation at Thr-816, inhibited by phosphorylation at Ser-928. Serine/threonine kinase which acts as a component of the MAP kinase signal transduction pathway. Once activated, acts as an upstream activator of the p38 MAPK signal transduction cascade through the phosphorylation and activation of several MAP kinase kinases. May function in a signal transduction pathway that is activated by various cell stresses and leads to apoptosis. Involved in phosphorylation of WNK4 in response to osmotic stress or hypotonic low-chloride stimulation via the p38 MAPK signal transduction cascade. The protein is Mitogen-activated protein kinase kinase kinase 15 of Mus musculus (Mouse).